The chain runs to 132 residues: Gonadotropin subunit beta-1 (132 aa).

An N-terminal signal peptide occupies residues 1-17 (MMRGVTMVLLLPMLVWA). Disulfide bonds link cysteine 25-cysteine 73, cysteine 39-cysteine 88, cysteine 50-cysteine 104, cysteine 54-cysteine 106, and cysteine 109-cysteine 116. N-linked (GlcNAc...) asparagine glycans are attached at residues asparagine 29 and asparagine 46.

It belongs to the glycoprotein hormones subunit beta family. Heterodimer of an alpha and a beta chain.

The protein resides in the secreted. In terms of biological role, involved in gametogenesis and steroidogenesis. This Ictalurus punctatus (Channel catfish) protein is Gonadotropin subunit beta-1 (cgba).